The primary structure comprises 409 residues: Casein kinase II subunit alpha-1 (409 aa).

The signal sequence occupies residues 1-35 (MIDTLFFLFFLFFDSPLRRLLLLCAVLALRAPTAH). Residue Asn-72 is glycosylated (N-linked (GlcNAc...) asparagine). The Protein kinase domain maps to 110–395 (YEVVRKVGRG…AKEAMAHAYF (286 aa)). ATP contacts are provided by residues 116 to 124 (VGRGKYSEV) and Lys-139. A glycan (N-linked (GlcNAc...) asparagine) is linked at Asn-188. Asp-227 serves as the catalytic Proton acceptor.

The protein belongs to the protein kinase superfamily. Ser/Thr protein kinase family. CK2 subfamily. Heterotetramer of two catalytic alpha subunits and two regulatory beta subunits. In terms of tissue distribution, seems to be present in all plant organs. But seems to be less expressed than CKA2.

The protein localises to the nucleus. The protein resides in the nucleolus. It catalyses the reaction L-seryl-[protein] + ATP = O-phospho-L-seryl-[protein] + ADP + H(+). It carries out the reaction L-threonyl-[protein] + ATP = O-phospho-L-threonyl-[protein] + ADP + H(+). Inhibited by heparin. Casein kinases are operationally defined by their preferential utilization of acidic proteins such as caseins as substrates. Phosphorylates casein in vitro. The alpha chain contains the catalytic site. The tetrameric holoenzyme CK2, composed of two alpha and two beta subunits, phosphorylates the transcription factor GBFl, resulting in stimulation of its DNA binding activity. CK2 phosphorylates the transcription factor PIF1 after an exposure to light, resulting in a proteasome-dependent degradation of PIF1 and promotion of photomorphogenesis. CK2 phosphorylates translation initiation factors. May participate in the regulation of the initiation of translation. Acts as a circadian clock component that maintains the correct period length through phosphorylation of CCA1. Required for the maintenance and control of genomic stability and chromatin structure. May act as an ectokinase that phosphorylates several extracellular proteins. This is Casein kinase II subunit alpha-1 from Arabidopsis thaliana (Mouse-ear cress).